The chain runs to 23 residues: Hongotoxin-4 (23 aa).

It belongs to the short scorpion toxin superfamily. Potassium channel inhibitor family. Alpha-KTx 02 subfamily. As to expression, expressed by the venom gland.

It localises to the secreted. Its function is as follows. Potent selective inhibitor of Kv1/KCNA voltage-gated potassium channels. This chain is Hongotoxin-4, found in Centruroides limbatus (Bark scorpion).